Reading from the N-terminus, the 416-residue chain is Dihydrolipoyllysine-residue succinyltransferase component of 2-oxoglutarate dehydrogenase complex (416 aa).

Residues 3–78 (IVDVKVPQLS…VADEIIAKID (76 aa)) enclose the Lipoyl-binding domain. K44 bears the N6-lipoyllysine mark. Positions 115-152 (VAMPSAAKLMAEAGLSAGQVAGTGKDGRITKGDALAAA) constitute a Peripheral subunit-binding (PSBD) domain. Residues H387 and D391 contribute to the active site.

The protein belongs to the 2-oxoacid dehydrogenase family. In terms of assembly, forms a 24-polypeptide structural core with octahedral symmetry. Part of the 2-oxoglutarate dehydrogenase (OGDH) complex composed of E1 (2-oxoglutarate dehydrogenase), E2 (dihydrolipoamide succinyltransferase) and E3 (dihydrolipoamide dehydrogenase); the complex contains multiple copies of the three enzymatic components (E1, E2 and E3). It depends on (R)-lipoate as a cofactor.

It catalyses the reaction N(6)-[(R)-dihydrolipoyl]-L-lysyl-[protein] + succinyl-CoA = N(6)-[(R)-S(8)-succinyldihydrolipoyl]-L-lysyl-[protein] + CoA. Its pathway is amino-acid degradation; L-lysine degradation via saccharopine pathway; glutaryl-CoA from L-lysine: step 6/6. E2 component of the 2-oxoglutarate dehydrogenase (OGDH) complex which catalyzes the second step in the conversion of 2-oxoglutarate to succinyl-CoA and CO(2). The polypeptide is Dihydrolipoyllysine-residue succinyltransferase component of 2-oxoglutarate dehydrogenase complex (sucB) (Cupriavidus necator (strain ATCC 17699 / DSM 428 / KCTC 22496 / NCIMB 10442 / H16 / Stanier 337) (Ralstonia eutropha)).